The primary structure comprises 827 residues: Cadherin-17 (827 aa).

The N-terminal stretch at Met-1–Lys-25 is a signal peptide. The Extracellular portion of the chain corresponds to Phe-26–Met-786. Cadherin domains are found at residues Pro-29–Gln-127, Ser-128–Pro-243, Val-244–Cys-339, Leu-340–Phe-448, Glu-449–Phe-565, Pro-566–Leu-666, and Ala-667–Gly-776. N-linked (GlcNAc...) asparagine glycans are attached at residues Asn-148, Asn-249, Asn-418, Asn-545, Asn-573, Asn-586, and Asn-721. The chain crosses the membrane as a helical span at residues Ala-787–Ile-807. Topologically, residues Arg-808 to Ser-827 are cytoplasmic.

In terms of tissue distribution, highest expression is found in intestine with lower expression in spleen, bone marrow, lung and testis. No expression detected in liver, kidney, heart, brain or skeletal muscle. Expressed in precursor B-cells and myeloid cells.

Its subcellular location is the cell membrane. Its function is as follows. Cadherins are calcium-dependent cell adhesion proteins. They preferentially interact with themselves in a homophilic manner in connecting cells; cadherins may thus contribute to the sorting of heterogeneous cell types. LI-cadherin may have a role in the morphological organization of liver and intestine. The polypeptide is Cadherin-17 (Cdh17) (Mus musculus (Mouse)).